A 479-amino-acid polypeptide reads, in one-letter code: Cardiolipin synthase A (479 aa).

Transmembrane regions (helical) follow at residues 8 to 28 (FFGYVLGFIHLLGTGAAIHAL) and 38 to 58 (IAWAMPLLFIPYFTLLPYLVF). 2 consecutive PLD phosphodiesterase domains span residues 218-245 (INFRNHRKIVVVDGLKGYIGGHNVGDEY) and 392-419 (EPGFLHQKVVLVDNEITAIGSANLDNRS). Residues H223, K225, D230, H397, K399, and D404 contribute to the active site.

The protein belongs to the phospholipase D family. Cardiolipin synthase subfamily. ClsA sub-subfamily.

The protein localises to the cell inner membrane. The enzyme catalyses 2 a 1,2-diacyl-sn-glycero-3-phospho-(1'-sn-glycerol) = a cardiolipin + glycerol. In terms of biological role, catalyzes the reversible phosphatidyl group transfer from one phosphatidylglycerol molecule to another to form cardiolipin (CL) (diphosphatidylglycerol) and glycerol. The sequence is that of Cardiolipin synthase A from Pseudomonas syringae pv. syringae (strain B728a).